The primary structure comprises 579 residues: 2-isopropylmalate synthase (579 aa).

Residues 33–308 (PRWLSTDLRD…DPGIDFSDIN (276 aa)) enclose the Pyruvate carboxyltransferase domain. Asp42, His247, His249, and Asn283 together coordinate Mg(2+). A regulatory domain region spans residues 450–579 (SSDLPVPLAS…IVAPLVAAGR (130 aa)).

The protein belongs to the alpha-IPM synthase/homocitrate synthase family. LeuA type 2 subfamily. As to quaternary structure, homodimer. The cofactor is Mg(2+).

It is found in the cytoplasm. The catalysed reaction is 3-methyl-2-oxobutanoate + acetyl-CoA + H2O = (2S)-2-isopropylmalate + CoA + H(+). Its pathway is amino-acid biosynthesis; L-leucine biosynthesis; L-leucine from 3-methyl-2-oxobutanoate: step 1/4. In terms of biological role, catalyzes the condensation of the acetyl group of acetyl-CoA with 3-methyl-2-oxobutanoate (2-ketoisovalerate) to form 3-carboxy-3-hydroxy-4-methylpentanoate (2-isopropylmalate). The protein is 2-isopropylmalate synthase of Streptosporangium roseum (strain ATCC 12428 / DSM 43021 / JCM 3005 / KCTC 9067 / NCIMB 10171 / NRRL 2505 / NI 9100).